A 191-amino-acid polypeptide reads, in one-letter code: Cyclin-dependent kinase inhibitor 1 (191 aa).

Residues 62–81 (LIHLEEEDKDGDTETSTYRR) are disordered. The interval 162-191 (QLKEKFKKKYNFDFEKEKPLEGRYEWVKLE) is required for inhibitory function and interaction with CDK kinase complexes.

Belongs to the CDI family. ICK/KRP subfamily. In terms of assembly, specifically interacts with CDKA-1, but not with CDKB1-1. Interacts with CYCD2-1 and CYCD3-1. In terms of processing, ubiquitinated independently by RKP and SCF (SKP1-CUL1-FBL5/SKP2B) protein ligase complex, leading to proteasomal degradation. In terms of tissue distribution, expressed at low levels in roots, stems, leaves and flowers.

The protein localises to the nucleus. It is found in the nucleoplasm. Binds and inhibits CYCD2-1/CDKA-1 kinase complex activity. Regulates cell division which is crucial for plant growth, development and morphogenesis. Functions in turning cells from a mitotic to an endoreplicating cell cycle mode. Acts cell- and non-cell-autonomously to regulate endoreduplication by allowing S phase progression, but blocking entry into mitosis. Keeps on the one hand the plant cell cycle locally controlled, and on the other hand provides a possibility of linking cell cycle control in single cells with the supracellular organization of a tissue or an organ. May target specifically CDKA-1. The polypeptide is Cyclin-dependent kinase inhibitor 1 (KRP1) (Arabidopsis thaliana (Mouse-ear cress)).